A 597-amino-acid chain; its full sequence is Elongation factor 4 (597 aa).

The region spanning 2 to 184 (KNIRNFSIIA…EIVAKIPAPA (183 aa)) is the tr-type G domain. GTP-binding positions include 14 to 19 (DHGKST) and 131 to 134 (NKID).

The protein belongs to the TRAFAC class translation factor GTPase superfamily. Classic translation factor GTPase family. LepA subfamily.

It localises to the cell inner membrane. It catalyses the reaction GTP + H2O = GDP + phosphate + H(+). In terms of biological role, required for accurate and efficient protein synthesis under certain stress conditions. May act as a fidelity factor of the translation reaction, by catalyzing a one-codon backward translocation of tRNAs on improperly translocated ribosomes. Back-translocation proceeds from a post-translocation (POST) complex to a pre-translocation (PRE) complex, thus giving elongation factor G a second chance to translocate the tRNAs correctly. Binds to ribosomes in a GTP-dependent manner. The polypeptide is Elongation factor 4 (Neisseria meningitidis serogroup A / serotype 4A (strain DSM 15465 / Z2491)).